A 365-amino-acid chain; its full sequence is Flagellar P-ring protein (365 aa).

Positions 1–19 (MFKALAGIVLALVATLAHA) are cleaved as a signal peptide.

Belongs to the FlgI family. As to quaternary structure, the basal body constitutes a major portion of the flagellar organelle and consists of four rings (L,P,S, and M) mounted on a central rod.

It localises to the periplasm. The protein localises to the bacterial flagellum basal body. Its function is as follows. Assembles around the rod to form the L-ring and probably protects the motor/basal body from shearing forces during rotation. The sequence is that of Flagellar P-ring protein from Salmonella heidelberg (strain SL476).